The following is a 579-amino-acid chain: Folliculin (579 aa).

Residues glycine 32–isoleucine 52 form a disordered region. Residues arginine 86–threonine 242 form the uDENN FLCN/SMCR8-type domain. The cDENN FLCN/SMCR8-type domain occupies asparagine 337–serine 491. One can recognise a dDENN FLCN/SMCR8-type domain in the interval glutamate 493–serine 558.

This sequence belongs to the folliculin family. In terms of assembly, component of the lysosomal folliculin complex (LFC).

It is found in the lysosome membrane. Its subcellular location is the cytoplasm. It localises to the cytosol. The protein resides in the cell projection. The protein localises to the cilium. It is found in the cytoskeleton. Its subcellular location is the microtubule organizing center. It localises to the centrosome. The protein resides in the spindle. The protein localises to the nucleus. Its activity is regulated as follows. GTPase-activating activity is inhibited in the folliculin complex (LFC), which stabilizes the GDP-bound state of RagA/RRAGA (or RagB/RRAGB), because Arg-164 is located far from the RagC/RRAGC or RagD/RRAGD nucleotide pocket. Disassembly of the LFC complex upon amino acid restimulation liberates the GTPase-activating activity. Multi-functional protein, involved in both the cellular response to amino acid availability and in the regulation of glycolysis. GTPase-activating protein that plays a key role in the cellular response to amino acid availability through regulation of the non-canonical mTORC1 signaling cascade controlling the MiT/TFE factors tfeb and tfe3. Activates mTORC1 by acting as a GTPase-activating protein: specifically stimulates GTP hydrolysis by RagC/RRAGC or RagD/RRAGD, promoting the conversion to the GDP-bound state of RagC/RRAGC or RagD/RRAGD, and thereby activating the kinase activity of mTORC1. The GTPase-activating activity is inhibited during starvation and activated in presence of nutrients. Acts as a key component for non-canonical mTORC1-dependent control of the MiT/TFE factors tfeb and tfe3, while it is not involved in mTORC1-dependent phosphorylation of canonical RPS6KB1/S6K1 and EIF4EBP1/4E-BP1. In low-amino acid conditions, the lysosomal folliculin complex (LFC) is formed on the membrane of lysosomes, which inhibits the GTPase-activating activity of flcn, inactivates mTORC1 and maximizes nuclear translocation of tfeb and tfe3. Upon amino acid restimulation, RagA/RRAGA (or RagB/RRAGB) nucleotide exchange promotes disassembly of the LFC complex and liberates the GTPase-activating activity of flcn, leading to activation of mTORC1 and subsequent cytoplasmic retention of tfeb and tfe3. Required for the exit of hematopoietic stem cell from pluripotency by promoting mTOR-dependent cytoplasmic retention of tfe3, thereby increasing Wnt signaling. Acts as an inhibitor of browning of adipose tissue by regulating mTOR-dependent cytoplasmic retention of tfe3. In response to flow stress, regulates STK11/LKB1 accumulation and mTORC1 activation through primary cilia. Required for starvation-induced perinuclear clustering of lysosomes by promoting association of rilp with its effector rab34. Involved in the control of embryonic stem cells differentiation; together with lamtor1 it is necessary to recruit and activate RagC/RRAGC and RagD/RRAGD at the lysosomes, and to induce exit of embryonic stem cells from pluripotency via non-canonical, mTOR-independent tfe3 inactivation. Regulates glycolysis by binding to lactate dehydrogenase ldha, acting as an uncompetitive inhibitor. The protein is Folliculin of Xenopus tropicalis (Western clawed frog).